The chain runs to 137 residues: MAPKAADKKPASKAPATASKAPEKKDAGKKTAASGDKKKRSKSRKETYSSYIYKVLKQVHPDTGISNRAMSILNSFVNDIFERVASEASKLAAYNKKSTISSREIQTSVRLILPGELAKHAVSEGTKAVTKYSSSTK.

Positions Met1 to Pro10 are enriched in basic and acidic residues. The interval Met1–Glu46 is disordered. N6-acetyllysine; alternate occurs at positions 8 and 9. Glycyl lysine isopeptide (Lys-Gly) (interchain with G-Cter in SUMO); alternate cross-links involve residues Lys8 and Lys9. Ser12 carries the phosphoserine modification. At Lys13 the chain carries N6-acetyllysine. Residue Lys24 is modified to N6-acetyllysine; alternate. Residue Lys24 forms a Glycyl lysine isopeptide (Lys-Gly) (interchain with G-Cter in SUMO); alternate linkage. Residue Lys25 forms a Glycyl lysine isopeptide (Lys-Gly) (interchain with G-Cter in SUMO) linkage. Residue Lys131 forms a Glycyl lysine isopeptide (Lys-Gly) (interchain with G-Cter in ubiquitin) linkage.

It belongs to the histone H2B family. The nucleosome is a histone octamer containing two molecules each of H2A, H2B, H3 and H4 assembled in one H3-H4 heterotetramer and two H2A-H2B heterodimers. The octamer wraps approximately 147 bp of DNA. In terms of processing, monoubiquitinated by the UBC2-BRE1 complex to form H2BK123ub1. H2BK123ub1 gives a specific tag for epigenetic transcriptional activation and is also prerequisite for H3K4me and H3K79me formation. H2BK123ub1 also modulates the formation of double-strand breaks during meiosis and is a prerequisite for DNA-damage checkpoint activation. Post-translationally, phosphorylated to form H2BS10ph during progression through meiotic prophase. May be correlated with chromosome condensation. Acetylated by GCN5 to form H2BK11ac and H2BK16ac. H2BK16ac can also be formed by ESA1. Acetylation of N-terminal lysines and particularly formation of H2BK11acK16ac has a positive effect on transcription. In terms of processing, sumoylation to form H2BK6su or H2BK7su, and probably also H2BK16su or H2BK17su, occurs preferentially near the telomeres and represses gene transcription.

Its subcellular location is the nucleus. It localises to the chromosome. Functionally, core component of nucleosome. Nucleosomes wrap and compact DNA into chromatin, limiting DNA accessibility to the cellular machineries which require DNA as a template. Histones thereby play a central role in transcription regulation, DNA repair, DNA replication and chromosomal stability. DNA accessibility is regulated via a complex set of post-translational modifications of histones, also called histone code, and nucleosome remodeling. The chain is Histone H2B (HTB1) from Gibberella zeae (strain ATCC MYA-4620 / CBS 123657 / FGSC 9075 / NRRL 31084 / PH-1) (Wheat head blight fungus).